The following is a 152-amino-acid chain: Superoxide dismutase [Cu-Zn] 2 (152 aa).

Positions 45, 47, and 62 each coordinate Cu cation. A disulfide bond links Cys56 and Cys145. 4 residues coordinate Zn(2+): His62, His70, His79, and Asp82. His119 contacts Cu cation.

It belongs to the Cu-Zn superoxide dismutase family. In terms of assembly, homodimer. It depends on Cu cation as a cofactor. Zn(2+) serves as cofactor.

The protein resides in the cytoplasm. It catalyses the reaction 2 superoxide + 2 H(+) = H2O2 + O2. Its function is as follows. Destroys radicals which are normally produced within the cells and which are toxic to biological systems. The polypeptide is Superoxide dismutase [Cu-Zn] 2 (SODCC2) (Oryza sativa subsp. japonica (Rice)).